The primary structure comprises 212 residues: 2-C-methyl-D-erythritol 4-phosphate cytidylyltransferase (212 aa).

This sequence belongs to the IspD/TarI cytidylyltransferase family. IspD subfamily.

It carries out the reaction 2-C-methyl-D-erythritol 4-phosphate + CTP + H(+) = 4-CDP-2-C-methyl-D-erythritol + diphosphate. It participates in isoprenoid biosynthesis; isopentenyl diphosphate biosynthesis via DXP pathway; isopentenyl diphosphate from 1-deoxy-D-xylulose 5-phosphate: step 2/6. Functionally, catalyzes the formation of 4-diphosphocytidyl-2-C-methyl-D-erythritol from CTP and 2-C-methyl-D-erythritol 4-phosphate (MEP). The chain is 2-C-methyl-D-erythritol 4-phosphate cytidylyltransferase from Chlamydia caviae (strain ATCC VR-813 / DSM 19441 / 03DC25 / GPIC) (Chlamydophila caviae).